Reading from the N-terminus, the 282-residue chain is 2-dehydro-3-deoxyphosphooctonate aldolase (282 aa).

The protein belongs to the KdsA family.

The protein resides in the cytoplasm. It carries out the reaction D-arabinose 5-phosphate + phosphoenolpyruvate + H2O = 3-deoxy-alpha-D-manno-2-octulosonate-8-phosphate + phosphate. It participates in carbohydrate biosynthesis; 3-deoxy-D-manno-octulosonate biosynthesis; 3-deoxy-D-manno-octulosonate from D-ribulose 5-phosphate: step 2/3. Its pathway is bacterial outer membrane biogenesis; lipopolysaccharide biosynthesis. The polypeptide is 2-dehydro-3-deoxyphosphooctonate aldolase (Shewanella piezotolerans (strain WP3 / JCM 13877)).